Here is a 507-residue protein sequence, read N- to C-terminus: uncharacterized protein (507 aa).

Helical transmembrane passes span 46 to 66, 83 to 103, 112 to 132, 141 to 161, 181 to 201, 207 to 227, 263 to 283, 299 to 319, 328 to 348, 354 to 374, 389 to 409, and 442 to 462; these read WIVL…WIGY, AWLS…AMWA, AVLI…ISSL, FPIC…IMFL, IGVM…PAIV, VIWL…IATF, IILL…YTVM, VCAA…SIFV, TLKI…QLTL, VILG…YPIG, TSTG…VFIM, and MSIM…VVLF. Positions 477 to 493 are enriched in basic and acidic residues; the sequence is ATADKAKELSNQNKDRI. The tract at residues 477 to 507 is disordered; it reads ATADKAKELSNQNKDRITLQAESAVEPLQKK.

The protein resides in the membrane. This is an uncharacterized protein from Caenorhabditis elegans.